Here is a 342-residue protein sequence, read N- to C-terminus: Fructose-1,6-bisphosphatase class 1 (342 aa).

Mg(2+) is bound by residues Glu91, Asp113, Leu115, and Asp116. Substrate contacts are provided by residues 116 to 119 (DGSS), Asn211, and Lys277. Glu283 serves as a coordination point for Mg(2+).

It belongs to the FBPase class 1 family. Homotetramer. Requires Mg(2+) as cofactor.

The protein localises to the cytoplasm. It catalyses the reaction beta-D-fructose 1,6-bisphosphate + H2O = beta-D-fructose 6-phosphate + phosphate. The protein operates within carbohydrate biosynthesis; gluconeogenesis. This chain is Fructose-1,6-bisphosphatase class 1, found in Bordetella petrii (strain ATCC BAA-461 / DSM 12804 / CCUG 43448).